Here is a 536-residue protein sequence, read N- to C-terminus: Cytochrome P450 78A7 (536 aa).

A helical membrane pass occupies residues 36 to 56 (LFLAVVFLSIVTWALAGGGGV). C481 is a binding site for heme.

It belongs to the cytochrome P450 family. Heme is required as a cofactor.

It localises to the membrane. In terms of biological role, functions probably in association with CYP78A5 in regulating relative growth of the shoot apical meristem and plant organs via a non-cell-autonomous signal. The chain is Cytochrome P450 78A7 (CYP78A7) from Arabidopsis thaliana (Mouse-ear cress).